A 308-amino-acid chain; its full sequence is Mu-like prophage FluMu major head subunit (308 aa).

To phage Mu protein T.

In Haemophilus influenzae (strain ATCC 51907 / DSM 11121 / KW20 / Rd), this protein is Mu-like prophage FluMu major head subunit.